The following is a 442-amino-acid chain: D-serine dehydratase 1 (442 aa).

An N6-(pyridoxal phosphate)lysine modification is found at lysine 118.

The protein belongs to the serine/threonine dehydratase family. DsdA subfamily. In terms of assembly, monomer. The cofactor is pyridoxal 5'-phosphate.

The enzyme catalyses D-serine = pyruvate + NH4(+). The sequence is that of D-serine dehydratase 1 from Escherichia coli O6:K15:H31 (strain 536 / UPEC).